A 293-amino-acid polypeptide reads, in one-letter code: 33 kDa chaperonin (293 aa).

2 cysteine pairs are disulfide-bonded: cysteine 236/cysteine 238 and cysteine 269/cysteine 272.

This sequence belongs to the HSP33 family. In terms of processing, under oxidizing conditions two disulfide bonds are formed involving the reactive cysteines. Under reducing conditions zinc is bound to the reactive cysteines and the protein is inactive.

Its subcellular location is the cytoplasm. Its function is as follows. Redox regulated molecular chaperone. Protects both thermally unfolding and oxidatively damaged proteins from irreversible aggregation. Plays an important role in the bacterial defense system toward oxidative stress. The chain is 33 kDa chaperonin from Lactobacillus delbrueckii subsp. bulgaricus (strain ATCC BAA-365 / Lb-18).